Here is a 209-residue protein sequence, read N- to C-terminus: UPF0502 protein PSHAa0076 (209 aa).

It belongs to the UPF0502 family.

The sequence is that of UPF0502 protein PSHAa0076 from Pseudoalteromonas translucida (strain TAC 125).